Reading from the N-terminus, the 1052-residue chain is Eukaryotic translation initiation factor 3 subunit A (1052 aa).

Residues 92-121 (LKKFIELAEKKVTEAQAKADEIQSSLESAA) are a coiled coil. One can recognise a PCI domain in the interval 339–523 (MTKAASFVLL…GVLTFDTDVF (185 aa)). Residues 580 to 906 (EARLQAKRAA…AEARRAARRT (327 aa)) are a coiled coil. 2 stretches are compositionally biased toward basic and acidic residues: residues 617-632 (AATD…EETR) and 794-901 (KEVS…EARR). Disordered regions lie at residues 617–646 (AATD…AEKQ) and 794–1052 (KEVS…QGGQ). 2 stretches are compositionally biased toward low complexity: residues 905-927 (RTGG…TAPR) and 948-964 (KEAA…AAPE). Positions 1013–1028 (GSSQPPSRTQTPGSSS) are enriched in polar residues.

It belongs to the eIF-3 subunit A family. As to quaternary structure, component of the eukaryotic translation initiation factor 3 (eIF-3) complex.

The protein resides in the cytoplasm. Its function is as follows. RNA-binding component of the eukaryotic translation initiation factor 3 (eIF-3) complex, which is involved in protein synthesis of a specialized repertoire of mRNAs and, together with other initiation factors, stimulates binding of mRNA and methionyl-tRNAi to the 40S ribosome. The eIF-3 complex specifically targets and initiates translation of a subset of mRNAs involved in cell proliferation. The sequence is that of Eukaryotic translation initiation factor 3 subunit A (tif32) from Aspergillus niger (strain ATCC MYA-4892 / CBS 513.88 / FGSC A1513).